The chain runs to 117 residues: Large ribosomal subunit protein uL18 (117 aa).

This sequence belongs to the universal ribosomal protein uL18 family. Part of the 50S ribosomal subunit; part of the 5S rRNA/L5/L18/L25 subcomplex. Contacts the 5S and 23S rRNAs.

In terms of biological role, this is one of the proteins that bind and probably mediate the attachment of the 5S RNA into the large ribosomal subunit, where it forms part of the central protuberance. In Phytoplasma mali (strain AT), this protein is Large ribosomal subunit protein uL18.